The primary structure comprises 476 residues: DnaJ protein P58IPK homolog A (476 aa).

A signal peptide spans 1-28 (MVAMARWPWRVLLPLLLLHSSPVFFVFA). 8 TPR repeats span residues 36-69 (PSTL…EPNH), 70-103 (SEAY…KPGS), 116-150 (AQNA…SPDC), 152-184 (KAKL…DEDN), 185-218 (LDAL…DPEH), 231-264 (LVKK…DPDH), 269-302 (VHLY…DGEL), and 304-336 (DALT…SPQD). The J domain occupies 357–423 (DWYKILGISK…DKRVRYDRGE (67 aa)).

As to quaternary structure, interacts with BIP1.

It is found in the endoplasmic reticulum lumen. In terms of biological role, may play a role in protein folding in the endoplasmic reticulum. The chain is DnaJ protein P58IPK homolog A from Oryza sativa subsp. japonica (Rice).